The chain runs to 320 residues: MASLGAAAEPERSLFGKDGAEACESPEGRRSGRRKRTKIVPVWENKPCGSSRSLVRRIGSHLPLKPCTRACFEALPSPANLYLTDTPMVPTLADIKWIAADDDETYARVRSDTRPLKHKWRPSPLLVMHRNSSVPNLKMKEEKMFCLKKPGLSLNKSSDIQEELSILRSQIARIVAGDSVSSCLGSDSIPVNVDLEATLPDYGPSYQSTTSFVISDITEEDELDVSEYSSASLVDSTISLQRQLETNMSDDDEDSLCLSKSNSFADMMGILKDIHKMKLNRDWSNRNQCLHKEEDPVNLISEVLKQKFALCDPDNVKTND.

Positions 1–37 (MASLGAAAEPERSLFGKDGAEACESPEGRRSGRRKRT) are disordered. The span at 9-30 (EPERSLFGKDGAEACESPEGRR) shows a compositional bias: basic and acidic residues.

Belongs to the MTFR1 family.

The protein resides in the mitochondrion outer membrane. Functionally, mitochondrial protein required for adaptation of miochondrial dynamics to metabolic changes. Regulates mitochondrial morphology at steady state and mediates AMPK-dependent stress-induced mitochondrial fragmentation via the control of OPA1 levels. This is Mitochondrial fission regulator 1-like-B (mtfr1l-b) from Xenopus laevis (African clawed frog).